The chain runs to 260 residues: MLEILYQDPWLVAVNKPAGWLVHRSWLDRDEKVVVMQTVRDQIGQHVFTAHRLDRPTSGVLLMGLSSEAGRRLAQQFEQHHIRKRYHAIVRGWLMDDAVLDYPLVEERDKIADKFAREDKAPQPAVTQYRGLATVEMAVPTGRYPTTRYGLVELEPKTGRKHQLRRHLAHLRHPIIGDSKHGDLRQNRSAAEHFACRRLMLHASRLELTHPFTGQPLIIQAGLDETWMQALTQFGWRGLLPDNERVEFTAASRQDETHLT.

The active site involves Asp-54.

Belongs to the pseudouridine synthase RluA family.

The catalysed reaction is uridine(65) in tRNA = pseudouridine(65) in tRNA. Its function is as follows. Responsible for synthesis of pseudouridine from uracil-65 in transfer RNAs. This is tRNA pseudouridine synthase C (truC) from Salmonella typhimurium (strain LT2 / SGSC1412 / ATCC 700720).